A 185-amino-acid chain; its full sequence is ATP synthase subunit delta (185 aa).

It belongs to the ATPase delta chain family. In terms of assembly, F-type ATPases have 2 components, F(1) - the catalytic core - and F(0) - the membrane proton channel. F(1) has five subunits: alpha(3), beta(3), gamma(1), delta(1), epsilon(1). CF(0) has four main subunits: a(1), b(2) and c(10-14). The alpha and beta chains form an alternating ring which encloses part of the gamma chain. F(1) is attached to F(0) by a central stalk formed by the gamma and epsilon chains, while a peripheral stalk is formed by the delta and b chains.

Its subcellular location is the cell membrane. Functionally, f(1)F(0) ATP synthase produces ATP from ADP in the presence of a proton or sodium gradient. F-type ATPases consist of two structural domains, F(1) containing the extramembraneous catalytic core and F(0) containing the membrane proton channel, linked together by a central stalk and a peripheral stalk. During catalysis, ATP synthesis in the catalytic domain of F(1) is coupled via a rotary mechanism of the central stalk subunits to proton translocation. In terms of biological role, this protein is part of the stalk that links CF(0) to CF(1). It either transmits conformational changes from CF(0) to CF(1) or is implicated in proton conduction. The sequence is that of ATP synthase subunit delta from Heliobacterium modesticaldum (strain ATCC 51547 / Ice1).